The chain runs to 308 residues: D-alanine--D-alanine ligase (308 aa).

The ATP-grasp domain maps to 102-302 (KKVAAAAGVA…FGELLSWMVE (201 aa)). Position 128–183 (128–183 (PMEPPYVVKPVREGSSFGVVIVKEDQTHPPQIISSAEWNYGAEVLVEKYIPGRELT)) interacts with ATP. Residues Asp252, Glu269, and Asn271 each contribute to the Mg(2+) site.

Belongs to the D-alanine--D-alanine ligase family. Mg(2+) serves as cofactor. It depends on Mn(2+) as a cofactor.

Its subcellular location is the cytoplasm. It carries out the reaction 2 D-alanine + ATP = D-alanyl-D-alanine + ADP + phosphate + H(+). Its pathway is cell wall biogenesis; peptidoglycan biosynthesis. Functionally, cell wall formation. The sequence is that of D-alanine--D-alanine ligase from Brucella anthropi (strain ATCC 49188 / DSM 6882 / CCUG 24695 / JCM 21032 / LMG 3331 / NBRC 15819 / NCTC 12168 / Alc 37) (Ochrobactrum anthropi).